Consider the following 534-residue polypeptide: Light-independent protochlorophyllide reductase subunit B (534 aa).

Residue D36 coordinates [4Fe-4S] cluster. D274 functions as the Proton donor in the catalytic mechanism. 409–410 provides a ligand contact to substrate; the sequence is GL. Residues 426–446 form a disordered region; that stretch reads DEAGPSHHGGKAVPASAPRAD.

Belongs to the ChlB/BchB/BchZ family. As to quaternary structure, protochlorophyllide reductase is composed of three subunits; BchL, BchN and BchB. Forms a heterotetramer of two BchB and two BchN subunits. It depends on [4Fe-4S] cluster as a cofactor.

It catalyses the reaction chlorophyllide a + oxidized 2[4Fe-4S]-[ferredoxin] + 2 ADP + 2 phosphate = protochlorophyllide a + reduced 2[4Fe-4S]-[ferredoxin] + 2 ATP + 2 H2O. Its pathway is porphyrin-containing compound metabolism; bacteriochlorophyll biosynthesis (light-independent). Functionally, component of the dark-operative protochlorophyllide reductase (DPOR) that uses Mg-ATP and reduced ferredoxin to reduce ring D of protochlorophyllide (Pchlide) to form chlorophyllide a (Chlide). This reaction is light-independent. The NB-protein (BchN-BchB) is the catalytic component of the complex. The polypeptide is Light-independent protochlorophyllide reductase subunit B (Cereibacter sphaeroides (strain ATCC 17023 / DSM 158 / JCM 6121 / CCUG 31486 / LMG 2827 / NBRC 12203 / NCIMB 8253 / ATH 2.4.1.) (Rhodobacter sphaeroides)).